We begin with the raw amino-acid sequence, 173 residues long: MLSLSIATPGTAAIFRRGTASATSTSSSFHGVRIQHQVSARVPAAATISSSSPKPSVVMMSKREAELKEIRSKTTEQLQEEVVDLKGELFMLRLQKSARNEFKSSDFRRMKKQVARMLTVKREREIKEGIKKRLSRKLDRQWKKSIVPRPPPSLKKLQEEEAAEEAAEAAKSA.

The transit peptide at 1 to 60 directs the protein to the chloroplast; the sequence is MLSLSIATPGTAAIFRRGTASATSTSSSFHGVRIQHQVSARVPAAATISSSSPKPSVVMM. The disordered stretch occupies residues 143 to 173; that stretch reads KKSIVPRPPPSLKKLQEEEAAEEAAEAAKSA. At Ser172 the chain carries Phosphoserine.

Belongs to the universal ribosomal protein uL29 family. As to quaternary structure, part of the 50S ribosomal subunit.

The protein resides in the plastid. It localises to the chloroplast. This is Large ribosomal subunit protein uL29c (RPL29) from Arabidopsis thaliana (Mouse-ear cress).